Here is a 343-residue protein sequence, read N- to C-terminus: Vancomycin/teicoplanin A-type resistance protein VanA (343 aa).

ATP-binding positions include Lys133, Phe169–Lys171, Ser177–Ser178, Glu207–Glu214, and Phe241. Positions Tyr137 to Val338 constitute an ATP-grasp domain. His244 provides a ligand contact to substrate. An ATP-binding site is contributed by Asn304–Glu305. Residues Glu305 and Asn307 each coordinate Mg(2+).

It belongs to the D-alanine--D-alanine ligase family. Mg(2+) is required as a cofactor. The cofactor is Mn(2+).

The protein localises to the cell membrane. It catalyses the reaction (R)-lactate + D-alanine + ATP = D-alanyl-(R)-lactate + ADP + phosphate. Required for high-level resistance to glycopeptide antibiotics. D-Ala--D-Ala ligase of altered specificity which catalyzes ester bond formation between D-Ala and various D-hydroxy acids; produces a peptidoglycan which does not terminate in D-alanine but in D-lactate, thus preventing vancomycin or teicoplanin binding. In Enterococcus faecium (Streptococcus faecium), this protein is Vancomycin/teicoplanin A-type resistance protein VanA (vanA).